The chain runs to 312 residues: Olfactory receptor 13J1 (312 aa).

At 1-25 the chain is on the extracellular side; it reads MEPLNRTEVSEFFLKGFSGYPALEH. Asn-5 carries an N-linked (GlcNAc...) asparagine glycan. The chain crosses the membrane as a helical span at residues 26-46; it reads LLFPLCSAMYLVTLLGNTAIM. Over 47–54 the chain is Cytoplasmic; that stretch reads AVSVLDIH. A helical transmembrane segment spans residues 55–75; that stretch reads LHTPVYFFLGNLSTLDICYTP. The Extracellular segment spans residues 76–99; that stretch reads TFVPLMLVHLLSSRKTISFAVCAI. Cys-97 and Cys-189 are disulfide-bonded. The helical transmembrane segment at 100-120 threads the bilayer; sequence QMCLSLSTGSTECLLLAITAY. Residues 121-139 lie on the Cytoplasmic side of the membrane; it reads DRYLAICQPLRYHVLMSHR. A helical transmembrane segment spans residues 140 to 160; it reads LCVLLMGAAWVLCLLKSVTEM. Over 161-197 the chain is Extracellular; that stretch reads VISMRLPFCGHHVVSHFTCKILAVLKLACGNTSVSED. N-linked (GlcNAc...) asparagine glycosylation occurs at Asn-191. A helical membrane pass occupies residues 198-217; that stretch reads FLLAGSILLLPVPLAFICLS. The Cytoplasmic portion of the chain corresponds to 218-237; sequence YLLILATILRVPSAARCCKA. Residues 238–258 traverse the membrane as a helical segment; that stretch reads FSTCLAHLAVVLLFYGTIIFM. Over 259 to 271 the chain is Extracellular; sequence YLKPKSKEAHISD. A helical transmembrane segment spans residues 272-292; it reads EVFTVLYAMVTTMLNPTIYSL. Residues 293–312 are Cytoplasmic-facing; it reads RNKEVKEAARKVWGRSRASR.

It belongs to the G-protein coupled receptor 1 family.

The protein resides in the cell membrane. Odorant receptor. This chain is Olfactory receptor 13J1 (OR13J1), found in Homo sapiens (Human).